The following is a 301-amino-acid chain: tRNA dimethylallyltransferase (301 aa).

9-16 is a binding site for ATP; it reads GPTASGKS. 11–16 contacts substrate; the sequence is TASGKS. The tract at residues 34–37 is interaction with substrate tRNA; the sequence is DSMQ.

The protein belongs to the IPP transferase family. In terms of assembly, monomer. Requires Mg(2+) as cofactor.

The catalysed reaction is adenosine(37) in tRNA + dimethylallyl diphosphate = N(6)-dimethylallyladenosine(37) in tRNA + diphosphate. Functionally, catalyzes the transfer of a dimethylallyl group onto the adenine at position 37 in tRNAs that read codons beginning with uridine, leading to the formation of N6-(dimethylallyl)adenosine (i(6)A). In Corynebacterium glutamicum (strain ATCC 13032 / DSM 20300 / JCM 1318 / BCRC 11384 / CCUG 27702 / LMG 3730 / NBRC 12168 / NCIMB 10025 / NRRL B-2784 / 534), this protein is tRNA dimethylallyltransferase.